The primary structure comprises 401 residues: Nodal homolog 3-B (401 aa).

Residues 1-18 (MAFLSLFLCLVFSSPLMA) form the signal peptide. Residues 19–274 (MPPALQGRKA…KVNGFRRLRR (256 aa)) constitute a propeptide that is removed on maturation. 3 N-linked (GlcNAc...) asparagine glycosylation sites follow: N168, N337, and N344. 2 cysteine pairs are disulfide-bonded: C299-C365 and C328-C396.

It belongs to the TGF-beta family. As to quaternary structure, monomer. The propeptide region interacts with bmp4 in a non-covalent manner. In terms of tissue distribution, expressed in the dorsal marginal region of late blastula, becoming restricted to the Spemann organizer at the early gastrula stage.

Its subcellular location is the secreted. Exhibits mesoderm-dorsalizing activity and neural-inducing activity, but lacks mesoderm-inducing activity. Regulates the expression of specific mesodermal and neural genes. Induces convergent extension movements at the embryonic midline by activating the fgf signaling pathway to induce t/bra expression in the organizer region. Acts with wnt11 to induce Spemann organizer cells and induce axis formation. The unprocessed protein antagonizes bmp-signaling. The protein is Nodal homolog 3-B of Xenopus tropicalis (Western clawed frog).